The chain runs to 62 residues: [Ser6, Val10, Asp11]-phyllokinin (62 aa).

A signal peptide spans 1–22 (MSFLKKSLLLVLFLGLVSFSIC). The propeptide occupies 23–51 (EEEKRETEEEENEDDMDEESEEKKRESPD). The tract at residues 24-62 (EEKRETEEEENEDDMDEESEEKKRESPDRPPGFSPFRVD) is disordered. The span at 30 to 42 (EEEENEDDMDEES) shows a compositional bias: acidic residues.

It belongs to the frog skin active peptide (FSAP) family. Bradykinin-related peptide subfamily. In terms of tissue distribution, expressed by the skin glands.

Its subcellular location is the secreted. Induces relaxation of rat smooth muscle from tail artery and contraction of that from ileum, urinary bladder and uterus. Binds to both bradykinin receptor B1 (BDKRB1) and B2 (BDKRB2). This Agalychnis spurrelli (Gliding leaf frog) protein is [Ser6, Val10, Asp11]-phyllokinin.